The sequence spans 372 residues: Cyclic GMP-AMP synthase-like receptor (372 aa).

Thr-68 contributes to the GTP binding site. Residues Ser-70 and 82–84 (EFD) contribute to the ATP site. Glu-82, Asp-84, and Asp-190 together coordinate Mg(2+). GTP is bound by residues Asp-190 and 236–243 (LVCAPYWE). ATP-binding positions include 240 to 243 (PYWE), Lys-261, and 274 to 278 (SYTIK).

The protein belongs to the mab-21 family. The cofactor is Mg(2+). Requires Mn(2+) as cofactor.

The catalysed reaction is GTP + ATP = 3',2'-cGAMP + 2 diphosphate. It carries out the reaction GTP + ATP = pppA(2'-5')pG + diphosphate. The enzyme catalyses pppA(2'-5')pG = 3',2'-cGAMP + diphosphate. With respect to regulation, the enzyme activity is specifically activated by double-stranded RNA (dsRNA). In terms of biological role, nucleotidyltransferase that catalyzes the formation of cyclic GMP-AMP (3',2'-cGAMP) from ATP and GTP and plays a key role in innate immunity. Synthesizes 3',2'-cGAMP in a two-step reaction through production of the linear intermediate pppA(2'-5')pG. Acts as a key sensor of double-stranded RNA (dsRNA), the presence of dsRNA in the cytoplasm being a danger signal that triggers the immune responses. Directly binds dsRNA longer than 15 bp, activating the nucleotidyltransferase activity, leading to synthesis of 3',2'-cGAMP, a second messenger that binds to and activates Sting, thereby triggering the antiviral immune response via activation of the NF-kappa-B transcription factor Rel (Relish). The protein is Cyclic GMP-AMP synthase-like receptor of Drosophila eugracilis (Fruit fly).